We begin with the raw amino-acid sequence, 449 residues long: Serine--tRNA ligase (449 aa).

Residue 256–258 (TSE) coordinates L-serine. Residue 287-289 (RAE) coordinates ATP. Glu-310 contributes to the L-serine binding site. 374–377 (EISS) provides a ligand contact to ATP. L-serine is bound at residue Ser-410.

The protein belongs to the class-II aminoacyl-tRNA synthetase family. Type-1 seryl-tRNA synthetase subfamily. In terms of assembly, homodimer. The tRNA molecule binds across the dimer.

It is found in the cytoplasm. The catalysed reaction is tRNA(Ser) + L-serine + ATP = L-seryl-tRNA(Ser) + AMP + diphosphate + H(+). The enzyme catalyses tRNA(Sec) + L-serine + ATP = L-seryl-tRNA(Sec) + AMP + diphosphate + H(+). It functions in the pathway aminoacyl-tRNA biosynthesis; selenocysteinyl-tRNA(Sec) biosynthesis; L-seryl-tRNA(Sec) from L-serine and tRNA(Sec): step 1/1. In terms of biological role, catalyzes the attachment of serine to tRNA(Ser). Is also able to aminoacylate tRNA(Sec) with serine, to form the misacylated tRNA L-seryl-tRNA(Sec), which will be further converted into selenocysteinyl-tRNA(Sec). The polypeptide is Serine--tRNA ligase (Xanthomonas oryzae pv. oryzae (strain MAFF 311018)).